The sequence spans 137 residues: Beta-synuclein (137 aa).

A run of 2 repeats spans residues 20–30 and 31–41. The tract at residues 20–67 is 4 X 11 AA tandem repeats of [EGS]-K-T-K-[EQ]-[GQ]-V-X(4); it reads EKTKQGVTEAAEKTKEGVLYVGSKTKEGVVQGVASVAEKTKEQASHLG. One copy of the 3; approximate repeat lies at 42–56; it reads SKTKEGVVQGVASVA. Repeat unit 4 spans residues 57 to 67; it reads EKTKEQASHLG. Residues 88–97 are compositionally biased toward basic and acidic residues; that stretch reads EFPTDLKPEE. The tract at residues 88–137 is disordered; the sequence is EFPTDLKPEEVAQEAAEEPLIEPLMEPEGESYEDSPQEEYQEYEPEAKGP. The span at 98–131 shows a compositional bias: acidic residues; the sequence is VAQEAAEEPLIEPLMEPEGESYEDSPQEEYQEYE. S118 is modified (phosphoserine; by BARK1, CK2 and GRK5).

Belongs to the synuclein family. In terms of processing, phosphorylated. Phosphorylation by G-protein coupled receptor kinases (GRK) is more efficient than phosphorylation by CK1, CK2 and CaM-kinase II. As to expression, expressed specifically in brain.

The protein resides in the cytoplasm. May be involved in neuronal plasticity. The chain is Beta-synuclein (Sncb) from Rattus norvegicus (Rat).